A 327-amino-acid chain; its full sequence is Aspartate--ammonia ligase (327 aa).

It belongs to the class-II aminoacyl-tRNA synthetase family. AsnA subfamily.

The protein localises to the cytoplasm. It carries out the reaction L-aspartate + NH4(+) + ATP = L-asparagine + AMP + diphosphate + H(+). Its pathway is amino-acid biosynthesis; L-asparagine biosynthesis; L-asparagine from L-aspartate (ammonia route): step 1/1. The chain is Aspartate--ammonia ligase from Bacillus mycoides (strain KBAB4) (Bacillus weihenstephanensis).